A 352-amino-acid chain; its full sequence is Anthranilate phosphoribosyltransferase (352 aa).

Residues G82, 85–86 (GD), S90, 92–95 (NIST), 110–118 (KHGNRAVTG), and G122 each bind 5-phospho-alpha-D-ribose 1-diphosphate. Position 82 (G82) interacts with anthranilate. S94 is a binding site for Mg(2+). N113 is an anthranilate binding site. R168 is an anthranilate binding site. Residues D232 and E233 each coordinate Mg(2+).

The protein belongs to the anthranilate phosphoribosyltransferase family. Homodimer. Requires Mg(2+) as cofactor.

It carries out the reaction N-(5-phospho-beta-D-ribosyl)anthranilate + diphosphate = 5-phospho-alpha-D-ribose 1-diphosphate + anthranilate. It participates in amino-acid biosynthesis; L-tryptophan biosynthesis; L-tryptophan from chorismate: step 2/5. Its function is as follows. Catalyzes the transfer of the phosphoribosyl group of 5-phosphorylribose-1-pyrophosphate (PRPP) to anthranilate to yield N-(5'-phosphoribosyl)-anthranilate (PRA). In Methanothermobacter thermautotrophicus (strain ATCC 29096 / DSM 1053 / JCM 10044 / NBRC 100330 / Delta H) (Methanobacterium thermoautotrophicum), this protein is Anthranilate phosphoribosyltransferase.